Here is a 141-residue protein sequence, read N- to C-terminus: Hemoglobin subunit alpha-D (141 aa).

Residues 1-141 (MLTAEDKKLI…VAAVLAEKYR (141 aa)) form the Globin domain. Residues H58 and H87 each contribute to the heme b site.

Belongs to the globin family. As to quaternary structure, heterotetramer of two alpha-D chains and two beta chains. As to expression, red blood cells.

Functionally, involved in oxygen transport from the lung to the various peripheral tissues. This is Hemoglobin subunit alpha-D (HBAD) from Accipiter gentilis (Northern goshawk).